A 3214-amino-acid polypeptide reads, in one-letter code: Ciliogenesis and planar polarity effector 1 (3214 aa).

2 helical membrane-spanning segments follow: residues 593-613 and 632-652; these read KLML…LQFI and AWVL…YWDM. 11 disordered regions span residues 1496-1523, 1644-1667, 1879-1991, 2047-2142, 2214-2241, 2398-2440, 2491-2529, 2622-2650, 2824-2855, 3037-3127, and 3158-3181; these read VGKK…ETPG, GNQS…PLQS, DGRH…HRAQ, FGES…FPPA, SLSD…SSHC, GITQ…ISND, GSHD…GHEP, TFQS…QSGE, VSLQ…HSSQ, TAPA…CRED, and MSPA…VSES. Basic and acidic residues predominate over residues 1512–1523; sequence NSQRKEDDETPG. The span at 1932 to 1942 shows a compositional bias: basic and acidic residues; that stretch reads QCSRKEPRDAS. 3 stretches are compositionally biased toward polar residues: residues 1943–1953, 1971–1984, and 2047–2068; these read VDTNLTEQKGA, NGAQ…QKTQ, and FGES…SRQR. The span at 2079–2099 shows a compositional bias: basic and acidic residues; it reads CTREPGKNSPADHKRISRPDQ. Residues 2215-2241 show a composition bias toward polar residues; that stretch reads LSDSCQPPVSQRTVHTTLPSPSDSSHC. Positions 2500-2514 are enriched in basic and acidic residues; that stretch reads DPDKEGPSQKADSES. Composition is skewed to polar residues over residues 2515–2524 and 2622–2634; these read SKNPQATAAS and TFQS…STRG. A compositionally biased stretch (acidic residues) spans 2830 to 2848; it reads EDVEEQKDAEETSETEFSE. Over residues 3090–3107 the composition is skewed to polar residues; the sequence is RGSSQLRGSQPPCQSQKP.

In terms of assembly, interacts with FUZ; INTU and WDPCP; the interactors are proposed to form the core CPLANE (ciliogenesis and planar polarity effectors) complex.

It is found in the membrane. The protein localises to the cell projection. It localises to the cilium. Its function is as follows. Involved in ciliogenesis. Involved in the establishment of cell polarity required for directional cell migration. Proposed to act in association with the CPLANE (ciliogenesis and planar polarity effectors) complex. Involved in recruitment of peripheral IFT-A proteins to basal bodies. The polypeptide is Ciliogenesis and planar polarity effector 1 (Mus musculus (Mouse)).